The following is a 164-amino-acid chain: SsrA-binding protein (164 aa).

The tract at residues 141-164 (KLHDKRQDEKQKSIKKEINSALKR) is disordered. Positions 145–158 (KRQDEKQKSIKKEI) are enriched in basic and acidic residues.

This sequence belongs to the SmpB family.

Its subcellular location is the cytoplasm. Its function is as follows. Required for rescue of stalled ribosomes mediated by trans-translation. Binds to transfer-messenger RNA (tmRNA), required for stable association of tmRNA with ribosomes. tmRNA and SmpB together mimic tRNA shape, replacing the anticodon stem-loop with SmpB. tmRNA is encoded by the ssrA gene; the 2 termini fold to resemble tRNA(Ala) and it encodes a 'tag peptide', a short internal open reading frame. During trans-translation Ala-aminoacylated tmRNA acts like a tRNA, entering the A-site of stalled ribosomes, displacing the stalled mRNA. The ribosome then switches to translate the ORF on the tmRNA; the nascent peptide is terminated with the 'tag peptide' encoded by the tmRNA and targeted for degradation. The ribosome is freed to recommence translation, which seems to be the essential function of trans-translation. The polypeptide is SsrA-binding protein (Prochlorococcus marinus (strain MIT 9301)).